The following is a 226-amino-acid chain: 2-C-methyl-D-erythritol 4-phosphate cytidylyltransferase (226 aa).

The protein belongs to the IspD/TarI cytidylyltransferase family. IspD subfamily.

The enzyme catalyses 2-C-methyl-D-erythritol 4-phosphate + CTP + H(+) = 4-CDP-2-C-methyl-D-erythritol + diphosphate. It functions in the pathway isoprenoid biosynthesis; isopentenyl diphosphate biosynthesis via DXP pathway; isopentenyl diphosphate from 1-deoxy-D-xylulose 5-phosphate: step 2/6. Catalyzes the formation of 4-diphosphocytidyl-2-C-methyl-D-erythritol from CTP and 2-C-methyl-D-erythritol 4-phosphate (MEP). The polypeptide is 2-C-methyl-D-erythritol 4-phosphate cytidylyltransferase (Bacillus mycoides (strain KBAB4) (Bacillus weihenstephanensis)).